Reading from the N-terminus, the 274-residue chain is Large ribosomal subunit protein uL2cz/uL2cy (274 aa).

Disordered regions lie at residues 1-23 (MAIHLYKTSTPSTRNGAVGSQVK) and 223-274 (MNPV…RRSK).

The protein belongs to the universal ribosomal protein uL2 family. In terms of assembly, part of the 50S ribosomal subunit.

Its subcellular location is the plastid. It is found in the chloroplast. The protein is Large ribosomal subunit protein uL2cz/uL2cy (rpl2-A) of Ranunculus macranthus (Large buttercup).